We begin with the raw amino-acid sequence, 122 residues long: Small ribosomal subunit protein uS13 (122 aa).

The interval 94–122 (RGLPVRGQRTKTNARQRKGPRPAIGGRKK) is disordered.

Belongs to the universal ribosomal protein uS13 family. As to quaternary structure, part of the 30S ribosomal subunit. Forms a loose heterodimer with protein S19. Forms two bridges to the 50S subunit in the 70S ribosome.

Its function is as follows. Located at the top of the head of the 30S subunit, it contacts several helices of the 16S rRNA. In the 70S ribosome it contacts the 23S rRNA (bridge B1a) and protein L5 of the 50S subunit (bridge B1b), connecting the 2 subunits; these bridges are implicated in subunit movement. Contacts the tRNAs in the A and P-sites. In Rubrobacter xylanophilus (strain DSM 9941 / JCM 11954 / NBRC 16129 / PRD-1), this protein is Small ribosomal subunit protein uS13.